Consider the following 295-residue polypeptide: MSDALNMTLDEIVKKSKSERSAAARSGGKGVSRKSGRGRGGPNGVVGGGRGGGPVRRGPLAVNTRPSSSFSINKLARRKRSLPWQNQNDLYEETLRAVGVSGVEVGTTVYITNLDQGVTNEDIRELYAEIGELKRYAIHYDKNGRPSGSAEVVYMRRSDAIQAMRKYNNVLLDGRPMKLEILGGNTESAPVAARVNVTGLNGRMKRSVFIGQGVRGGRVGRGRGSGPSGRRLPLQQNQQGGVTAGRGGFRGRGRGNGGGRGNKSGGRGGKKPVEKSAADLDKDLESYHAEAMNIS.

Positions 1 to 67 (MSDALNMTLD…GPLAVNTRPS (67 aa)) are disordered. Ser-2 carries the N-acetylserine modification. A compositionally biased stretch (basic and acidic residues) spans 11–22 (EIVKKSKSERSA). The span at 38–55 (GRGGPNGVVGGGRGGGPV) shows a compositional bias: gly residues. An RRM domain is found at 107-184 (TTVYITNLDQ…RPMKLEILGG (78 aa)). Residues 212–295 (QGVRGGRVGR…SYHAEAMNIS (84 aa)) form a disordered region. Gly residues-rich tracts occupy residues 213–227 (GVRGGRVGRGRGSGP) and 242–267 (VTAGRGGFRGRGRGNGGGRGNKSGGR). Over residues 271 to 288 (KPVEKSAADLDKDLESYH) the composition is skewed to basic and acidic residues.

It belongs to the ALYREF family. In terms of assembly, interacts with PARP1.

Its subcellular location is the nucleus. The protein resides in the nucleoplasm. It localises to the nucleolus. In terms of biological role, export adapter involved in nuclear export of spliced and unspliced mRNA. This is THO complex subunit 4C from Arabidopsis thaliana (Mouse-ear cress).